The chain runs to 430 residues: tRNA(Ile)-lysidine synthase (430 aa).

27–32 lines the ATP pocket; the sequence is SGGSDS.

This sequence belongs to the tRNA(Ile)-lysidine synthase family.

The protein localises to the cytoplasm. It catalyses the reaction cytidine(34) in tRNA(Ile2) + L-lysine + ATP = lysidine(34) in tRNA(Ile2) + AMP + diphosphate + H(+). Ligates lysine onto the cytidine present at position 34 of the AUA codon-specific tRNA(Ile) that contains the anticodon CAU, in an ATP-dependent manner. Cytidine is converted to lysidine, thus changing the amino acid specificity of the tRNA from methionine to isoleucine. This chain is tRNA(Ile)-lysidine synthase, found in Rickettsia prowazekii (strain Madrid E).